The primary structure comprises 454 residues: Kynurenine--oxoglutarate transaminase 3 (454 aa).

Residue G71 coordinates substrate. K116 carries the post-translational modification N6-acetyllysine; alternate. The residue at position 116 (K116) is an N6-succinyllysine; alternate. N218 is a binding site for substrate. K280 carries the N6-(pyridoxal phosphate)lysine modification. A substrate-binding site is contributed by R429.

This sequence belongs to the class-I pyridoxal-phosphate-dependent aminotransferase family. As to quaternary structure, homodimer. The cofactor is pyridoxal 5'-phosphate.

The catalysed reaction is L-kynurenine + 2-oxoglutarate = kynurenate + L-glutamate + H2O. It catalyses the reaction L-kynurenine + glyoxylate = kynurenate + glycine + H2O. The enzyme catalyses 3-hydroxy-L-kynurenine + glyoxylate = xanthurenate + glycine + H2O. It carries out the reaction an S-substituted L-cysteine + H2O = a thiol + pyruvate + NH4(+). It functions in the pathway amino-acid degradation; L-kynurenine degradation; kynurenate from L-kynurenine: step 1/2. Catalyzes the irreversible transamination of the L-tryptophan metabolite L-kynurenine to form kynurenic acid (KA), an intermediate in the tryptophan catabolic pathway which is also a broad spectrum antagonist of the three ionotropic excitatory amino acid receptors among others. May catalyze the beta-elimination of S-conjugates and Se-conjugates of L-(seleno)cysteine, resulting in the cleavage of the C-S or C-Se bond. Has transaminase activity towards L-kynurenine, tryptophan, phenylalanine, serine, cysteine, methionine, histidine, glutamine and asparagine with glyoxylate as an amino group acceptor (in vitro). Has lower activity with 2-oxoglutarate as amino group acceptor (in vitro). This is Kynurenine--oxoglutarate transaminase 3 from Rattus norvegicus (Rat).